The following is a 347-amino-acid chain: BSD domain-containing protein C22A12.14c (347 aa).

Residues Thr123 and Thr125 each carry the phosphothreonine modification. The BSD domain maps to 167 to 219; it reads WEKEISIDGKTEEISLLLEEYPDLRKQMESLVPSEVSYDDFWKRFFWHKEVVQ. Residues 229-347 are disordered; it reads DEEEIFSWGD…DDDEDDDDWE (119 aa). Ser235, Ser241, and Ser246 each carry phosphoserine. Acidic residues predominate over residues 240–251; the sequence is RSDEEESDNEQV. The segment covering 297 to 312 has biased composition (basic and acidic residues); that stretch reads HDGEVDGEVKEEEENK. Positions 313-325 are enriched in low complexity; sequence VSSSSNIEASQSS. Over residues 327–337 the composition is skewed to basic and acidic residues; sequence EVKDEANRKVD. Positions 338–347 are enriched in acidic residues; sequence DDDEDDDDWE.

The protein resides in the cytoplasm. This Schizosaccharomyces pombe (strain 972 / ATCC 24843) (Fission yeast) protein is BSD domain-containing protein C22A12.14c.